Consider the following 635-residue polypeptide: Chaperone protein HtpG (635 aa).

Positions 1-346 (MSQTTTTSAS…SADLPLNVSR (346 aa)) are a; substrate-binding. A b region spans residues 347-563 (EILQESRDVR…QNELSPHLLR (217 aa)). A c region spans residues 564-635 (MLKAAGQEAP…KRLNGLLLKA (72 aa)).

This sequence belongs to the heat shock protein 90 family. As to quaternary structure, homodimer.

It localises to the cytoplasm. Functionally, molecular chaperone. Has ATPase activity. This is Chaperone protein HtpG from Bordetella pertussis (strain Tohama I / ATCC BAA-589 / NCTC 13251).